Here is a 312-residue protein sequence, read N- to C-terminus: Methionyl-tRNA formyltransferase (312 aa).

Position 112-115 (112-115) interacts with (6S)-5,6,7,8-tetrahydrofolate; the sequence is SLLP.

It belongs to the Fmt family.

It carries out the reaction L-methionyl-tRNA(fMet) + (6R)-10-formyltetrahydrofolate = N-formyl-L-methionyl-tRNA(fMet) + (6S)-5,6,7,8-tetrahydrofolate + H(+). Functionally, attaches a formyl group to the free amino group of methionyl-tRNA(fMet). The formyl group appears to play a dual role in the initiator identity of N-formylmethionyl-tRNA by promoting its recognition by IF2 and preventing the misappropriation of this tRNA by the elongation apparatus. The protein is Methionyl-tRNA formyltransferase of Dehalococcoides mccartyi (strain CBDB1).